The following is a 295-amino-acid chain: MTASSVTSSRTGARVERLPLARFTTLGVGGEAEVWFVDNHEQLAEALEQPYRILGGGSNLVVADEGVPERVIRLTGRLAAADLTPDPDLSSTETVVTGWVGGGVPLPGLIRRLQKLGLSNLEGTVGIPAQVGGAVWMNAGTRYGEMFDGLHTLEIVSPEGMRQVTPDELDWGYRRSGIPRGHVVTRVRLKLRRSTPEAVLAKMALADQARKGQPKMKTPGCAFKNPGGVSAGKLIDEAGLKGTRIGNAMIAPEHGNFIVNLGGASSRDIHALLALIRARVGVPLELEYELWPEQA.

Residues 27-194 (GVGGEAEVWF…TRVRLKLRRS (168 aa)) enclose the FAD-binding PCMH-type domain. Residue Arg174 is part of the active site. Cys221 acts as the Proton donor in catalysis. The active site involves Glu287.

This sequence belongs to the MurB family. Requires FAD as cofactor.

The protein resides in the cytoplasm. The enzyme catalyses UDP-N-acetyl-alpha-D-muramate + NADP(+) = UDP-N-acetyl-3-O-(1-carboxyvinyl)-alpha-D-glucosamine + NADPH + H(+). The protein operates within cell wall biogenesis; peptidoglycan biosynthesis. Functionally, cell wall formation. The polypeptide is UDP-N-acetylenolpyruvoylglucosamine reductase (Deinococcus geothermalis (strain DSM 11300 / CIP 105573 / AG-3a)).